The primary structure comprises 193 residues: MSVSRETERLATYAGLLRKWNPAINLIAASTIDQIEARHIADSLHLVEIAKNAQGSWVDLGSGGGLPGIVVAIMRPDLELSMVESDQRKGAFLRNAIRELALPHAKVLCKRIEALDRLDAANLSARALAPLPQLMAYVERHLSPSGTAWLMKGRNWQAEVSQAQSDWKFDLKTHQSATDPDAAILEITGLRHA.

Residues glycine 61, leucine 66, isoleucine 112–glutamate 113, and arginine 126 contribute to the S-adenosyl-L-methionine site.

The protein belongs to the methyltransferase superfamily. RNA methyltransferase RsmG family.

Its subcellular location is the cytoplasm. It carries out the reaction guanosine(527) in 16S rRNA + S-adenosyl-L-methionine = N(7)-methylguanosine(527) in 16S rRNA + S-adenosyl-L-homocysteine. Functionally, specifically methylates the N7 position of guanine in position 527 of 16S rRNA. The sequence is that of Ribosomal RNA small subunit methyltransferase G from Paracoccus denitrificans (strain Pd 1222).